Consider the following 387-residue polypeptide: 3-ketoacyl-CoA thiolase (387 aa).

Cys91 acts as the Acyl-thioester intermediate in catalysis. Residues His343 and Cys373 each act as proton acceptor in the active site.

This sequence belongs to the thiolase-like superfamily. Thiolase family. Heterotetramer of two alpha chains (FadB) and two beta chains (FadA).

It localises to the cytoplasm. The enzyme catalyses an acyl-CoA + acetyl-CoA = a 3-oxoacyl-CoA + CoA. The protein operates within lipid metabolism; fatty acid beta-oxidation. Catalyzes the final step of fatty acid oxidation in which acetyl-CoA is released and the CoA ester of a fatty acid two carbons shorter is formed. This chain is 3-ketoacyl-CoA thiolase, found in Enterobacter sp. (strain 638).